A 385-amino-acid chain; its full sequence is Lipid-A-disaccharide synthase 2 (385 aa).

The protein belongs to the LpxB family.

The enzyme catalyses a lipid X + a UDP-2-N,3-O-bis[(3R)-3-hydroxyacyl]-alpha-D-glucosamine = a lipid A disaccharide + UDP + H(+). Its pathway is bacterial outer membrane biogenesis; LPS lipid A biosynthesis. Functionally, condensation of UDP-2,3-diacylglucosamine and 2,3-diacylglucosamine-1-phosphate to form lipid A disaccharide, a precursor of lipid A, a phosphorylated glycolipid that anchors the lipopolysaccharide to the outer membrane of the cell. The chain is Lipid-A-disaccharide synthase 2 from Legionella pneumophila (strain Paris).